A 103-amino-acid polypeptide reads, in one-letter code: BLOC-1-related complex subunit 7 (103 aa).

The protein belongs to the BORCS7 family.

It is found in the lysosome membrane. Its function is as follows. As part of a BORC-like complex may play a role in lysosomes movement and localization at the cell periphery. Associated with the cytosolic face of lysosomes, this complex may couple lysosomes to microtubule plus-end-directed kinesin motor. The sequence is that of BLOC-1-related complex subunit 7 from Danio rerio (Zebrafish).